The following is a 424-amino-acid chain: Probable ribonuclease FAU-1 (424 aa).

Belongs to the FAU-1 family.

Its function is as follows. Probable RNase involved in rRNA stability through maturation and/or degradation of precursor rRNAs. Binds to RNA in loop regions with AU-rich sequences. This Saccharolobus islandicus (strain Y.G.57.14 / Yellowstone #1) (Sulfolobus islandicus) protein is Probable ribonuclease FAU-1.